A 1608-amino-acid polypeptide reads, in one-letter code: Protein REDUCED CHLOROPLAST COVERAGE 3 (1608 aa).

The span at 1-12 (MAPRSSKGKSNN) shows a compositional bias: basic residues. Disordered stretches follow at residues 1 to 22 (MAPR…KKKR) and 278 to 303 (VSES…GRNG). A Clu domain is found at 288–564 (EDEHWGGNGG…KKETDVCGKP (277 aa)). 4 TPR repeats span residues 848–881 (GRTL…MIAV), 890–923 (ACAY…NERE), 932–965 (MKSY…LHFT), and 974–1007 (AATY…NKRL). Disordered stretches follow at residues 1194 to 1226 (VEES…RQPD), 1238 to 1292 (HNRN…ASGA), 1369 to 1400 (KQES…KTSD), 1466 to 1499 (TPRS…VSVD), and 1531 to 1552 (PAAL…KDSA). Positions 1217–1224 (GRKSRQRQ) match the Nuclear localization signal motif. 2 stretches are compositionally biased toward polar residues: residues 1242–1265 (QDVQ…LSKS) and 1373–1385 (QESA…LTSE). Residues 1535 to 1546 (SKTSPEAESGGT) show a composition bias toward polar residues.

The protein resides in the nucleus. The protein localises to the cytoplasm. It localises to the cytosol. Its function is as follows. May act as the scaffold of a protein complex, which sequesters key factors that are required for the G2 to M transition in meristematic tissues. Together with REC2, REC3 and FMT/CLU, contributes to the establishment of the cellular volume devoted to the chloroplast compartment. This is Protein REDUCED CHLOROPLAST COVERAGE 3 from Arabidopsis thaliana (Mouse-ear cress).